Reading from the N-terminus, the 872-residue chain is Alanine--tRNA ligase (872 aa).

Positions 567, 571, 669, and 673 each coordinate Zn(2+).

It belongs to the class-II aminoacyl-tRNA synthetase family. Requires Zn(2+) as cofactor.

Its subcellular location is the cytoplasm. The enzyme catalyses tRNA(Ala) + L-alanine + ATP = L-alanyl-tRNA(Ala) + AMP + diphosphate. Functionally, catalyzes the attachment of alanine to tRNA(Ala) in a two-step reaction: alanine is first activated by ATP to form Ala-AMP and then transferred to the acceptor end of tRNA(Ala). Also edits incorrectly charged Ser-tRNA(Ala) and Gly-tRNA(Ala) via its editing domain. The chain is Alanine--tRNA ligase from Streptococcus sanguinis (strain SK36).